The chain runs to 694 residues: Elongation factor G (694 aa).

A tr-type G domain is found at 8 to 287 (EDYRNFGIMA…AVVEFLPAPT (280 aa)). Residues 17-24 (AHIDAGKT), 86-90 (DTPGH), and 140-143 (NKMD) each bind GTP.

This sequence belongs to the TRAFAC class translation factor GTPase superfamily. Classic translation factor GTPase family. EF-G/EF-2 subfamily.

The protein localises to the cytoplasm. Its function is as follows. Catalyzes the GTP-dependent ribosomal translocation step during translation elongation. During this step, the ribosome changes from the pre-translocational (PRE) to the post-translocational (POST) state as the newly formed A-site-bound peptidyl-tRNA and P-site-bound deacylated tRNA move to the P and E sites, respectively. Catalyzes the coordinated movement of the two tRNA molecules, the mRNA and conformational changes in the ribosome. This is Elongation factor G from Brucella abortus (strain S19).